The following is a 374-amino-acid chain: Chaperone protein DnaJ (374 aa).

Positions 5-70 (DYYKLLGVDR…EKRAGYDRYG (66 aa)) constitute a J domain. The CR-type zinc-finger motif lies at 136-214 (GIQAPIHYVT…CNGSGRRRDE (79 aa)). Cysteine 149, cysteine 152, cysteine 166, cysteine 169, cysteine 188, cysteine 191, cysteine 202, and cysteine 205 together coordinate Zn(2+). 4 CXXCXGXG motif repeats span residues 149 to 156 (CDMCQGRG), 166 to 173 (CHTCQGSG), 188 to 195 (CTTCYGEG), and 202 to 209 (CKKCNGSG).

This sequence belongs to the DnaJ family. Homodimer. It depends on Zn(2+) as a cofactor.

It localises to the cytoplasm. In terms of biological role, participates actively in the response to hyperosmotic and heat shock by preventing the aggregation of stress-denatured proteins and by disaggregating proteins, also in an autonomous, DnaK-independent fashion. Unfolded proteins bind initially to DnaJ; upon interaction with the DnaJ-bound protein, DnaK hydrolyzes its bound ATP, resulting in the formation of a stable complex. GrpE releases ADP from DnaK; ATP binding to DnaK triggers the release of the substrate protein, thus completing the reaction cycle. Several rounds of ATP-dependent interactions between DnaJ, DnaK and GrpE are required for fully efficient folding. Also involved, together with DnaK and GrpE, in the DNA replication of plasmids through activation of initiation proteins. The chain is Chaperone protein DnaJ from Wolbachia sp. subsp. Brugia malayi (strain TRS).